The following is a 156-amino-acid chain: Large ribosomal subunit protein uL15 (156 aa).

The disordered stretch occupies residues 1-56 (MDLSNLKPAEGATQAGQRLGRGEGSGRGGHSSTRGTKGQSSRSGSGTRPIWFEGGQ).

The protein belongs to the universal ribosomal protein uL15 family. In terms of assembly, part of the 50S ribosomal subunit.

In terms of biological role, binds to the 23S rRNA. The sequence is that of Large ribosomal subunit protein uL15 from Salinibacter ruber (strain DSM 13855 / M31).